A 487-amino-acid chain; its full sequence is Glutamyl-tRNA(Gln) amidotransferase subunit A (487 aa).

K78 acts as the Charge relay system in catalysis. Polar residues predominate over residues 135 to 144 (SAYQTTTNPW). A disordered region spans residues 135 to 155 (SAYQTTTNPWDASRVPGGSSG). Residue S153 is the Charge relay system of the active site. S177 acts as the Acyl-ester intermediate in catalysis.

Belongs to the amidase family. GatA subfamily. In terms of assembly, heterotrimer of A, B and C subunits.

The enzyme catalyses L-glutamyl-tRNA(Gln) + L-glutamine + ATP + H2O = L-glutaminyl-tRNA(Gln) + L-glutamate + ADP + phosphate + H(+). Its function is as follows. Allows the formation of correctly charged Gln-tRNA(Gln) through the transamidation of misacylated Glu-tRNA(Gln) in organisms which lack glutaminyl-tRNA synthetase. The reaction takes place in the presence of glutamine and ATP through an activated gamma-phospho-Glu-tRNA(Gln). This Maridesulfovibrio salexigens (strain ATCC 14822 / DSM 2638 / NCIMB 8403 / VKM B-1763) (Desulfovibrio salexigens) protein is Glutamyl-tRNA(Gln) amidotransferase subunit A.